The chain runs to 280 residues: Foldase protein PrsA 4 (280 aa).

Residues Met1 to Ala21 form the signal peptide. Cys22 carries N-palmitoyl cysteine lipidation. A lipid anchor (S-diacylglycerol cysteine) is attached at Cys22. The PpiC domain maps to Lys132–Asp222.

The protein belongs to the PrsA family.

It localises to the cell membrane. The enzyme catalyses [protein]-peptidylproline (omega=180) = [protein]-peptidylproline (omega=0). Plays a major role in protein secretion by helping the post-translocational extracellular folding of several secreted proteins. The polypeptide is Foldase protein PrsA 4 (prsA4) (Bacillus cereus (strain ATCC 14579 / DSM 31 / CCUG 7414 / JCM 2152 / NBRC 15305 / NCIMB 9373 / NCTC 2599 / NRRL B-3711)).